Consider the following 108-residue polypeptide: Movement protein (108 aa).

The tract at residues 1–25 (MDASSQYSALPYPQPPRVPSAAPSA) is disordered. The chain crosses the membrane as a helical span at residues 35 to 55 (EIVIFTFVSVLALYLLWLWVL). The disordered stretch occupies residues 73–108 (LIFGPGERPPVASADGSRPVPDPSPPVRRDLDLSRV). Basic and acidic residues predominate over residues 99-108 (VRRDLDLSRV).

This sequence belongs to the mastrevirus movement protein family. As to quaternary structure, interacts with the capsid protein (CP). Part of a MP-CP-viral DNA complex.

Its subcellular location is the host membrane. Functionally, involved in the viral transport within, and between cells. The chain is Movement protein from Megathyrsus maximus (PanSV).